Reading from the N-terminus, the 194-residue chain is Peptidyl-tRNA hydrolase (194 aa).

Tyr17 lines the tRNA pocket. His22 serves as the catalytic Proton acceptor. TRNA is bound by residues Phe68, Asn70, and Asn116.

This sequence belongs to the PTH family. As to quaternary structure, monomer.

It localises to the cytoplasm. It carries out the reaction an N-acyl-L-alpha-aminoacyl-tRNA + H2O = an N-acyl-L-amino acid + a tRNA + H(+). Hydrolyzes ribosome-free peptidyl-tRNAs (with 1 or more amino acids incorporated), which drop off the ribosome during protein synthesis, or as a result of ribosome stalling. Functionally, catalyzes the release of premature peptidyl moieties from peptidyl-tRNA molecules trapped in stalled 50S ribosomal subunits, and thus maintains levels of free tRNAs and 50S ribosomes. The chain is Peptidyl-tRNA hydrolase from Haemophilus influenzae (strain PittGG).